The sequence spans 65 residues: Large ribosomal subunit protein bL35 (65 aa).

The protein belongs to the bacterial ribosomal protein bL35 family.

The sequence is that of Large ribosomal subunit protein bL35 from Geobacter sp. (strain M21).